We begin with the raw amino-acid sequence, 140 residues long: Phosphoribosyl-AMP cyclohydrolase (140 aa).

D85 lines the Mg(2+) pocket. C86 is a binding site for Zn(2+). Residues D87 and D89 each contribute to the Mg(2+) site. Residues C102 and C109 each contribute to the Zn(2+) site.

The protein belongs to the PRA-CH family. Homodimer. Mg(2+) serves as cofactor. Requires Zn(2+) as cofactor.

Its subcellular location is the cytoplasm. It catalyses the reaction 1-(5-phospho-beta-D-ribosyl)-5'-AMP + H2O = 1-(5-phospho-beta-D-ribosyl)-5-[(5-phospho-beta-D-ribosylamino)methylideneamino]imidazole-4-carboxamide. Its pathway is amino-acid biosynthesis; L-histidine biosynthesis; L-histidine from 5-phospho-alpha-D-ribose 1-diphosphate: step 3/9. Its function is as follows. Catalyzes the hydrolysis of the adenine ring of phosphoribosyl-AMP. The sequence is that of Phosphoribosyl-AMP cyclohydrolase from Bradyrhizobium diazoefficiens (strain JCM 10833 / BCRC 13528 / IAM 13628 / NBRC 14792 / USDA 110).